Consider the following 53-residue polypeptide: UPF0391 membrane protein Bmul_5473/BMULJ_06024 (53 aa).

2 consecutive transmembrane segments (helical) span residues 5–25 and 30–50; these read ALIF…GIAA and IAKI…LLGV.

Belongs to the UPF0391 family.

Its subcellular location is the cell membrane. The protein is UPF0391 membrane protein Bmul_5473/BMULJ_06024 of Burkholderia multivorans (strain ATCC 17616 / 249).